A 671-amino-acid polypeptide reads, in one-letter code: MSEFQLVTRFQPAGDQPEAIRLMVEGIEAGLAHQTLLGVTGSGKTFSIANVIAQVQRPTLVLAPNKTLAAQLYGEFKAFFPNNAVEYFVSYYDYYQPEAYVPSSDTFIEKDASINDHIEQMRLSATKALLERKDAIIVTTVSCIYGLGSPETYLKMVLHVDRGDKLDQRALLRRLADLQYTRNDMDFARATFRVRGDVIDIYPAESDLEAIRIELFDDEVESISAFDPLTGEVIRKLPRFTFYPKSHYVTPRETLLDAIEGIKVELQERLEYLRSNNKLVEAQRLEQRTRFDLEMILELGYCNGIENYSRYLSGRPAGAAPPTLYDYLPADALLVIDESHVSVPQVGAMYKGDRSRKETLVEYGFRLPSALDNRPMRFDEWEGVSPQTIFVSATPGNYEAEHAGRVVEQVVRPTGLVDPQVEVRPALTQVDDLLSEITKRVAVEERVLVTTLTKRMAEDLTDYLADHGVRVRYLHSDIDTVERVEIIRDLRLGTFDVLVGINLLREGLDMPEVSLVAILDADKEGFLRSERSLIQTIGRAARNLNGRAILYADRITGSMERAIGETERRRDKQIAFNLANGITPKGVVKDVADIMEGATVPGSRSKKRKGMAKAAEENARYENELRSPSEITKRIRQLEEKMYQLARDLEFEAAAQMRDEITKLRERLLTV.

One can recognise a Helicase ATP-binding domain in the interval 25–412 (EGIEAGLAHQ…AGRVVEQVVR (388 aa)). 38-45 (GVTGSGKT) serves as a coordination point for ATP. The short motif at 91 to 114 (YYDYYQPEAYVPSSDTFIEKDASI) is the Beta-hairpin element. Positions 429 to 582 (QVDDLLSEIT…QIAFNLANGI (154 aa)) constitute a Helicase C-terminal domain. The segment at 601–623 (PGSRSKKRKGMAKAAEENARYEN) is disordered. The span at 614–623 (AAEENARYEN) shows a compositional bias: basic and acidic residues. In terms of domain architecture, UVR spans 632-667 (TKRIRQLEEKMYQLARDLEFEAAAQMRDEITKLRER).

This sequence belongs to the UvrB family. In terms of assembly, forms a heterotetramer with UvrA during the search for lesions. Interacts with UvrC in an incision complex.

The protein resides in the cytoplasm. Functionally, the UvrABC repair system catalyzes the recognition and processing of DNA lesions. A damage recognition complex composed of 2 UvrA and 2 UvrB subunits scans DNA for abnormalities. Upon binding of the UvrA(2)B(2) complex to a putative damaged site, the DNA wraps around one UvrB monomer. DNA wrap is dependent on ATP binding by UvrB and probably causes local melting of the DNA helix, facilitating insertion of UvrB beta-hairpin between the DNA strands. Then UvrB probes one DNA strand for the presence of a lesion. If a lesion is found the UvrA subunits dissociate and the UvrB-DNA preincision complex is formed. This complex is subsequently bound by UvrC and the second UvrB is released. If no lesion is found, the DNA wraps around the other UvrB subunit that will check the other stand for damage. The sequence is that of UvrABC system protein B from Pseudomonas fluorescens (strain ATCC BAA-477 / NRRL B-23932 / Pf-5).